A 390-amino-acid polypeptide reads, in one-letter code: Neuromedin-B receptor (390 aa).

Topologically, residues 1–44 (MPPKSLSNLSQTAGVNQSGFFPGASERDFLPATDRTTAEFVIRC) are extracellular. Residues asparagine 8 and asparagine 16 are each glycosylated (N-linked (GlcNAc...) asparagine). Residues 45-65 (VIPSLYLLIITVGLLGNIVLV) form a helical membrane-spanning segment. Over 66-76 (KIFLTNSAMRS) the chain is Cytoplasmic. Residues 77–97 (VPNIFISNLAAGDVLLLLTCV) traverse the membrane as a helical segment. Residues 98 to 117 (PVDASRYFLDEWMFGKVGCK) lie on the Extracellular side of the membrane. A disulfide bond links cysteine 116 and cysteine 198. The helical transmembrane segment at 118-138 (LIPVIQLTSVGVSVFTLTALS) threads the bilayer. At 139 to 155 (ADRYRAIVNPMDIQTSG) the chain is on the cytoplasmic side. A helical membrane pass occupies residues 156-176 (AVLWTCVKAGGIWVVSVLLAV). The Extracellular portion of the chain corresponds to 177–210 (PEAVFSEVARIDGLDNGSFTACIPYPQTDELHPK). Asparagine 192 is a glycosylation site (N-linked (GlcNAc...) asparagine). Residues 211 to 231 (IHSVLIFLVYFLIPLGIISVY) form a helical membrane-spanning segment. Over 232 to 266 (YYHIAKTLIKSAHNLPGEYNEHTKKQMETRKRLAK) the chain is Cytoplasmic. The chain crosses the membrane as a helical span at residues 267-287 (IVLVFVGCFVFCWFPNHILYM). Residues 288-305 (YRSFNYNEIDPSLGHMIV) lie on the Extracellular side of the membrane. Residues 306-328 (TLVARVLSFCNSCVNPFALYLLS) form a helical membrane-spanning segment. Residues 329 to 390 (ESFRKHFNNQ…GHSVKQEMAL (62 aa)) are Cytoplasmic-facing. The S-palmitoyl cysteine moiety is linked to residue cysteine 341. Serine 352 carries the post-translational modification Phosphoserine.

It belongs to the G-protein coupled receptor 1 family. As to expression, highly expressed in peripheral tissues where it is detected in the respiratory system, circulatory system, digestive system, urogenital system, lymphatic organs and endocrine system (at protein level). In the testis, expressed mainly in Leydig cells (at protein level).

The protein resides in the cell membrane. Its function is as follows. Receptor for neuromedin-B. Contributes to the maintenance of basal sigh rate through signaling in the pre-Botzinger complex, a cluster of several thousand neurons in the ventrolateral medulla responsible for inspiration during respiratory activity. Contributes to the induction of sneezing following exposure to chemical irritants or allergens which causes release of NMB by nasal sensory neurons and activation of NMBR-expressing neurons in the sneeze-evoking region of the brainstem. These in turn activate neurons of the caudal ventral respiratory group, giving rise to the sneezing response. Contributes to induction of acute itch, possibly through its activation on dorsal root ganglion neurons by the NMB peptide. Plays a role in the innate immune response to influenza A virus infection by enhancing interferon alpha expression and reducing expression of IL6. Plays a role in CSF1-induced proliferation of osteoclast precursors by contributing to the positive regulation of the expression of the CSF1 receptor CSF1R. The protein is Neuromedin-B receptor (NMBR) of Sus scrofa (Pig).